Reading from the N-terminus, the 117-residue chain is Immunoglobulin heavy variable 3-11 (117 aa).

The first 19 residues, 1–19, serve as a signal peptide directing secretion; sequence MEFGLSWVFLVAIIKGVQC. Position 20 is a pyrrolidone carboxylic acid (Gln-20). Residues 20–44 form a framework-1 region; that stretch reads QVQLVESGGGLVKPGGSLRLSCAAS. The Ig-like domain occupies 20–117; that stretch reads QVQLVESGGG…EDTAVYYCAR (98 aa). Residues Cys-41 and Cys-115 are joined by a disulfide bond. A complementarity-determining-1 region spans residues 45–52; the sequence is GFTFSDYY. The segment at 53 to 69 is framework-2; the sequence is MSWIRQAPGKGLEWVSY. A complementarity-determining-2 region spans residues 70–77; that stretch reads ISSSSSYT. Residues 78–115 form a framework-3 region; that stretch reads NYADSVKGRFTISRDNAKNSLYLQMNSLRAEDTAVYYC. The complementarity-determining-3 stretch occupies residues 116–117; it reads AR.

As to quaternary structure, immunoglobulins are composed of two identical heavy chains and two identical light chains; disulfide-linked.

It is found in the secreted. The protein localises to the cell membrane. V region of the variable domain of immunoglobulin heavy chains that participates in the antigen recognition. Immunoglobulins, also known as antibodies, are membrane-bound or secreted glycoproteins produced by B lymphocytes. In the recognition phase of humoral immunity, the membrane-bound immunoglobulins serve as receptors which, upon binding of a specific antigen, trigger the clonal expansion and differentiation of B lymphocytes into immunoglobulins-secreting plasma cells. Secreted immunoglobulins mediate the effector phase of humoral immunity, which results in the elimination of bound antigens. The antigen binding site is formed by the variable domain of one heavy chain, together with that of its associated light chain. Thus, each immunoglobulin has two antigen binding sites with remarkable affinity for a particular antigen. The variable domains are assembled by a process called V-(D)-J rearrangement and can then be subjected to somatic hypermutations which, after exposure to antigen and selection, allow affinity maturation for a particular antigen. The sequence is that of Immunoglobulin heavy variable 3-11 from Homo sapiens (Human).